Here is a 467-residue protein sequence, read N- to C-terminus: Flagellum-specific ATP synthase (467 aa).

An ATP-binding site is contributed by 180-187 (AGSGVGKS).

Belongs to the ATPase alpha/beta chains family.

Its subcellular location is the cytoplasm. It catalyses the reaction ATP + H2O + 4 H(+)(in) = ADP + phosphate + 5 H(+)(out). Functionally, probable catalytic subunit of a protein translocase for flagellum-specific export, or a proton translocase involved in local circuits at the flagellum. The chain is Flagellum-specific ATP synthase (fliI) from Rhizobium meliloti (strain 1021) (Ensifer meliloti).